Reading from the N-terminus, the 300-residue chain is Aspartate carbamoyltransferase catalytic subunit (300 aa).

Carbamoyl phosphate-binding residues include Arg54 and Thr55. Lys82 contributes to the L-aspartate binding site. The carbamoyl phosphate site is built by Arg104, His131, and Gln134. Residues Arg164 and Arg213 each contribute to the L-aspartate site. 2 residues coordinate carbamoyl phosphate: Ala256 and Pro257.

The protein belongs to the aspartate/ornithine carbamoyltransferase superfamily. ATCase family. Heterododecamer (2C3:3R2) of six catalytic PyrB chains organized as two trimers (C3), and six regulatory PyrI chains organized as three dimers (R2).

It catalyses the reaction carbamoyl phosphate + L-aspartate = N-carbamoyl-L-aspartate + phosphate + H(+). It functions in the pathway pyrimidine metabolism; UMP biosynthesis via de novo pathway; (S)-dihydroorotate from bicarbonate: step 2/3. Catalyzes the condensation of carbamoyl phosphate and aspartate to form carbamoyl aspartate and inorganic phosphate, the committed step in the de novo pyrimidine nucleotide biosynthesis pathway. The chain is Aspartate carbamoyltransferase catalytic subunit from Malacoplasma penetrans (strain HF-2) (Mycoplasma penetrans).